We begin with the raw amino-acid sequence, 81 residues long: Defensin-like protein 266 (81 aa).

The signal sequence occupies residues 1–26; sequence MEKIVFRKIVFVAFLLSLSCLLEGEA. Disulfide bonds link Cys40–Cys58, Cys46–Cys63, and Cys50–Cys65.

The protein belongs to the DEFL family.

It localises to the secreted. The protein is Defensin-like protein 266 of Arabidopsis thaliana (Mouse-ear cress).